The primary structure comprises 234 residues: Large ribosomal subunit protein uL1 (234 aa).

It belongs to the universal ribosomal protein uL1 family. In terms of assembly, part of the 50S ribosomal subunit.

In terms of biological role, binds directly to 23S rRNA. The L1 stalk is quite mobile in the ribosome, and is involved in E site tRNA release. Protein L1 is also a translational repressor protein, it controls the translation of the L11 operon by binding to its mRNA. This chain is Large ribosomal subunit protein uL1, found in Anaeromyxobacter dehalogenans (strain 2CP-C).